The following is a 349-amino-acid chain: Protein-glutamate methylesterase/protein-glutamine glutaminase (349 aa).

The region spanning 5–122 (RVLSVDDSAL…REGMLAYSEM (118 aa)) is the Response regulatory domain. Aspartate 56 is subject to 4-aspartylphosphate. The CheB-type methylesterase domain maps to 152 to 344 (LLSSEKLIAI…QQMLAKISAG (193 aa)). Residues serine 164, histidine 190, and aspartate 286 contribute to the active site.

This sequence belongs to the CheB family. Post-translationally, phosphorylated by CheA. Phosphorylation of the N-terminal regulatory domain activates the methylesterase activity.

Its subcellular location is the cytoplasm. The enzyme catalyses [protein]-L-glutamate 5-O-methyl ester + H2O = L-glutamyl-[protein] + methanol + H(+). The catalysed reaction is L-glutaminyl-[protein] + H2O = L-glutamyl-[protein] + NH4(+). Functionally, involved in chemotaxis. Part of a chemotaxis signal transduction system that modulates chemotaxis in response to various stimuli. Catalyzes the demethylation of specific methylglutamate residues introduced into the chemoreceptors (methyl-accepting chemotaxis proteins or MCP) by CheR. Also mediates the irreversible deamidation of specific glutamine residues to glutamic acid. This Salmonella choleraesuis (strain SC-B67) protein is Protein-glutamate methylesterase/protein-glutamine glutaminase.